The primary structure comprises 485 residues: Membrane-bound lytic murein transglycosylase F (485 aa).

A signal peptide spans 1–29; that stretch reads MFAHTALRQRCAKWLFATGLFLLLGACVE. Positions 30–267 are non-LT domain; the sequence is KPSTLERVKE…RLKDRYYGHV (238 aa). The interval 268–485 is LT domain; it reads DVLGYVGAYT…DKPAEQSPPM (218 aa). Residue Glu314 is part of the active site. The segment at 465–485 is disordered; that stretch reads EGNLHVPGVNKDKPAEQSPPM.

It in the N-terminal section; belongs to the bacterial solute-binding protein 3 family. The protein in the C-terminal section; belongs to the transglycosylase Slt family.

Its subcellular location is the cell outer membrane. It carries out the reaction Exolytic cleavage of the (1-&gt;4)-beta-glycosidic linkage between N-acetylmuramic acid (MurNAc) and N-acetylglucosamine (GlcNAc) residues in peptidoglycan, from either the reducing or the non-reducing ends of the peptidoglycan chains, with concomitant formation of a 1,6-anhydrobond in the MurNAc residue.. Functionally, murein-degrading enzyme that degrades murein glycan strands and insoluble, high-molecular weight murein sacculi, with the concomitant formation of a 1,6-anhydromuramoyl product. Lytic transglycosylases (LTs) play an integral role in the metabolism of the peptidoglycan (PG) sacculus. Their lytic action creates space within the PG sacculus to allow for its expansion as well as for the insertion of various structures such as secretion systems and flagella. The polypeptide is Membrane-bound lytic murein transglycosylase F (Pseudomonas putida (strain W619)).